The chain runs to 194 residues: Flagellin A2 (194 aa).

Positions 1 to 12 are excised as a propeptide; sequence MFEFITDEDERG.

This sequence belongs to the archaeal flagellin family. Glycosylated.

It is found in the archaeal flagellum. Its function is as follows. Flagellin is the subunit protein which polymerizes to form the filaments of archaeal flagella. The polypeptide is Flagellin A2 (flaA2) (Halobacterium salinarum (strain ATCC 700922 / JCM 11081 / NRC-1) (Halobacterium halobium)).